A 155-amino-acid polypeptide reads, in one-letter code: Large ribosomal subunit protein uL15 (155 aa).

A disordered region spans residues 1-63 (MKLHELAPNP…QMPLTRRLPK (63 aa)). Gly residues-rich tracts occupy residues 21-31 (RGIGSGLGKTS) and 42-52 (SGGGVRPGFEG).

Belongs to the universal ribosomal protein uL15 family. As to quaternary structure, part of the 50S ribosomal subunit.

In terms of biological role, binds to the 23S rRNA. The chain is Large ribosomal subunit protein uL15 from Symbiobacterium thermophilum (strain DSM 24528 / JCM 14929 / IAM 14863 / T).